Here is a 426-residue protein sequence, read N- to C-terminus: Target of rapamycin complex 2 subunit AVO2 (426 aa).

ANK repeat units follow at residues 4 to 33, 39 to 68, 74 to 104, 108 to 137, and 141 to 171; these read EPSV…DLLT, NGWS…DKHE, KGNT…FINH, NGRA…DLWV, and NGDT…SLDD. Residues 259 to 302 are disordered; that stretch reads STHTTSGNGGNRRSSITNPVFNPRKPTLSTDSFSSSSNSSSRLR. The segment covering 260 to 278 has biased composition (polar residues); the sequence is THTTSGNGGNRRSSITNPV. Over residues 285 to 302 the composition is skewed to low complexity; it reads TLSTDSFSSSSNSSSRLR. Phosphoserine occurs at positions 315 and 350. The span at 350–359 shows a compositional bias: polar residues; sequence SNDNVRGDSQ. Positions 350–392 are disordered; sequence SNDNVRGDSQTATINDDGGGGNGGDATIGMGLRKDPDDENENK. A compositionally biased stretch (gly residues) spans 366 to 375; it reads DGGGGNGGDA. The span at 381–392 shows a compositional bias: basic and acidic residues; it reads LRKDPDDENENK.

The target of rapamycin complex 2 (TORC2) is composed of at least AVO1, AVO2, BIT61, LST8, TOR2 and TSC11. TORC2 forms a homodimer. Contrary to TORC1, TORC2 does not bind to and is not sensitive to FKBP-rapamycin. AVO2 is peripherally associated to AVO1 and TSC11.

It is found in the cell membrane. The protein localises to the vacuole membrane. Functionally, component of TORC2, which regulates cell cycle-dependent polarization of the actin-cytoskeleton and cell wall integrity. TORC2 controls polarity of the actin cytoskeleton, which is required for orienting the secretory pathway toward discrete growth sites, via the RHO1/PKC1/MAPK cell integrity pathway. This Saccharomyces cerevisiae (strain ATCC 204508 / S288c) (Baker's yeast) protein is Target of rapamycin complex 2 subunit AVO2 (AVO2).